A 405-amino-acid chain; its full sequence is Argininosuccinate synthase (405 aa).

ATP-binding positions include alanine 10–serine 18 and alanine 37. L-citrulline contacts are provided by tyrosine 88 and serine 93. Glycine 118 is a binding site for ATP. L-aspartate is bound by residues threonine 120, asparagine 124, and aspartate 125. Residue asparagine 124 coordinates L-citrulline. L-citrulline contacts are provided by arginine 128, serine 179, serine 188, glutamate 264, and tyrosine 276.

This sequence belongs to the argininosuccinate synthase family. Type 1 subfamily. In terms of assembly, homotetramer.

Its subcellular location is the cytoplasm. It carries out the reaction L-citrulline + L-aspartate + ATP = 2-(N(omega)-L-arginino)succinate + AMP + diphosphate + H(+). It functions in the pathway amino-acid biosynthesis; L-arginine biosynthesis; L-arginine from L-ornithine and carbamoyl phosphate: step 2/3. This chain is Argininosuccinate synthase, found in Pseudomonas fluorescens (strain SBW25).